We begin with the raw amino-acid sequence, 271 residues long: Indole-3-glycerol phosphate synthase (271 aa).

The protein belongs to the TrpC family.

It catalyses the reaction 1-(2-carboxyphenylamino)-1-deoxy-D-ribulose 5-phosphate + H(+) = (1S,2R)-1-C-(indol-3-yl)glycerol 3-phosphate + CO2 + H2O. It functions in the pathway amino-acid biosynthesis; L-tryptophan biosynthesis; L-tryptophan from chorismate: step 4/5. The polypeptide is Indole-3-glycerol phosphate synthase (Haloarcula marismortui (strain ATCC 43049 / DSM 3752 / JCM 8966 / VKM B-1809) (Halobacterium marismortui)).